Consider the following 351-residue polypeptide: Photosystem II D2 protein (351 aa).

The chain crosses the membrane as a helical span at residues Thr39–Thr59. A chlorophyll a-binding site is contributed by His116. Residues Gly123–Pro139 traverse the membrane as a helical segment. Positions 128 and 141 each coordinate pheophytin a. Residues Ile151–Ala164 form a helical membrane-spanning segment. Residue His196 coordinates chlorophyll a. The chain crosses the membrane as a helical span at residues Gly206–Asp226. A plastoquinone-binding residues include His213 and Phe260. His213 serves as a coordination point for Fe cation. A Fe cation-binding site is contributed by His267. The helical transmembrane segment at Gly277–Arg293 threads the bilayer.

This sequence belongs to the reaction center PufL/M/PsbA/D family. As to quaternary structure, PSII is composed of 1 copy each of membrane proteins PsbA, PsbB, PsbC, PsbD, PsbE, PsbF, PsbH, PsbI, PsbJ, PsbK, PsbL, PsbM, PsbT, PsbX, PsbY, PsbZ, Psb30/Ycf12, at least 3 peripheral proteins of the oxygen-evolving complex and a large number of cofactors. It forms dimeric complexes. The D1/D2 heterodimer binds P680, chlorophylls that are the primary electron donor of PSII, and subsequent electron acceptors. It shares a non-heme iron and each subunit binds pheophytin, quinone, additional chlorophylls, carotenoids and lipids. There is also a Cl(-1) ion associated with D1 and D2, which is required for oxygen evolution. The PSII complex binds additional chlorophylls, carotenoids and specific lipids. is required as a cofactor.

Its subcellular location is the plastid. It is found in the chloroplast thylakoid membrane. The catalysed reaction is 2 a plastoquinone + 4 hnu + 2 H2O = 2 a plastoquinol + O2. Functionally, photosystem II (PSII) is a light-driven water:plastoquinone oxidoreductase that uses light energy to abstract electrons from H(2)O, generating O(2) and a proton gradient subsequently used for ATP formation. It consists of a core antenna complex that captures photons, and an electron transfer chain that converts photonic excitation into a charge separation. The D1/D2 (PsbA/PsbD) reaction center heterodimer binds P680, the primary electron donor of PSII as well as several subsequent electron acceptors. D2 is needed for assembly of a stable PSII complex. In Heterosigma akashiwo (strain NIES-293 / 8280G21-1), this protein is Photosystem II D2 protein.